The primary structure comprises 362 residues: D-alanine--D-alanine ligase (362 aa).

One can recognise an ATP-grasp domain in the interval 141 to 346; that stretch reads KNIFAEAGLN…YPELIEELIR (206 aa). 174–229 contributes to the ATP binding site; it reads EEALGYPCFVKPANLGSSVGINKCKDREELEKAFEEAFQFDRKIIVEENIIGREVE. Mg(2+) is bound by residues aspartate 300, glutamate 313, and asparagine 315.

The protein belongs to the D-alanine--D-alanine ligase family. It depends on Mg(2+) as a cofactor. Requires Mn(2+) as cofactor.

It is found in the cytoplasm. It catalyses the reaction 2 D-alanine + ATP = D-alanyl-D-alanine + ADP + phosphate + H(+). It participates in cell wall biogenesis; peptidoglycan biosynthesis. Its function is as follows. Cell wall formation. This is D-alanine--D-alanine ligase from Bacillus cytotoxicus (strain DSM 22905 / CIP 110041 / 391-98 / NVH 391-98).